Consider the following 175-residue polypeptide: ATP-dependent protease subunit HslV (175 aa).

Thr-2 is a catalytic residue. The Na(+) site is built by Gly-158, Cys-161, and Thr-164.

The protein belongs to the peptidase T1B family. HslV subfamily. In terms of assembly, a double ring-shaped homohexamer of HslV is capped on each side by a ring-shaped HslU homohexamer. The assembly of the HslU/HslV complex is dependent on binding of ATP.

The protein resides in the cytoplasm. It catalyses the reaction ATP-dependent cleavage of peptide bonds with broad specificity.. Its activity is regulated as follows. Allosterically activated by HslU binding. Functionally, protease subunit of a proteasome-like degradation complex believed to be a general protein degrading machinery. In Haemophilus influenzae (strain 86-028NP), this protein is ATP-dependent protease subunit HslV.